The following is a 142-amino-acid chain: Galectin-16 (142 aa).

Positions 6–138 (VPYKLPVSLS…DVSLDSVLVN (133 aa)) constitute a Galectin domain.

In terms of tissue distribution, predominantly and highly expressed in the placenta where it is localized mainly in the syncytiotrophoblast and in the endothelia of fetal vessels. Also detected in the amnion and chorionic trophoblasts in fetal membranes.

In terms of biological role, binds lactose with high affinity. Strong inducer of T-cell apoptosis. The polypeptide is Galectin-16 (Homo sapiens (Human)).